Here is an 829-residue protein sequence, read N- to C-terminus: Transcription activator GutR (829 aa).

The segment at residues 42–61 (IDKIALQLGVSPNTIKSWIG) is a DNA-binding region (H-T-H motif). Position 200–207 (200–207 (GWAGMGKT)) interacts with ATP. TPR repeat units follow at residues 697–730 (HRVLLVRGDLSFARGYHVEAIQLYEAANEISSTY), 736–769 (IEAYFNLGVAYVKCDQFEKAEEAFEQMLYDKHNA), and 775–808 (IYYHYGMAQLLYRKGEKTKAVESNQKAIRLIDSW).

Functionally, activator of the glucitol dehydrogenase gene (gutB). This is Transcription activator GutR (gutR) from Bacillus subtilis (strain 168).